Here is a 505-residue protein sequence, read N- to C-terminus: MGDWNLLGGILEEVHSHSTIVGKIWLTILFIFRMLVLGVAAEDVWDDEQSAFACNTQQPGCNNICYDDAFPISLIRFWVLQIIFVSSPSLVYMGHALYRLRDFEKQRQKKKLYLRAQMENPELDLEEQQRVDKELRRLEEQKRIHKVPLKGCLLRTYVLHILTRSVLEVGFMIGQYILYGFQMHPIYKCTQAPCPNSVDCFVSRPTEKTIFMLFMHSIAAISLLLNILEIFHLGIRKIMRALDGKSSSGNTENETGPPFHSTNYSGTQQCMICSSLPERISLLQANNKQQVIRVNIPRSKSMWQIPHPRQLEVDVSCGKRDWAEKIESCAQLHVHSPCPHDRSARIQHPGQQPCHSVFGPKNAMSQSWFGTMTASQHRPSSALETWERSQGPEASGRSLTDRQSHFQGSDGSARESGVWTDRLGPGSRKASFLSRLMSEKGQRHSDSGSSRSLNSSCLDFSHGENSPSPLPSATGHRASMVSKSSHVDSPPHSSFIIHETYVYVY.

Topologically, residues 1 to 16 (MGDWNLLGGILEEVHS) are cytoplasmic. A helical membrane pass occupies residues 17-37 (HSTIVGKIWLTILFIFRMLVL). Residues 38–76 (GVAAEDVWDDEQSAFACNTQQPGCNNICYDDAFPISLIR) lie on the Extracellular side of the membrane. The chain crosses the membrane as a helical span at residues 77–97 (FWVLQIIFVSSPSLVYMGHAL). Topologically, residues 98-165 (YRLRDFEKQR…TYVLHILTRS (68 aa)) are cytoplasmic. A helical membrane pass occupies residues 166 to 186 (VLEVGFMIGQYILYGFQMHPI). Residues 187–209 (YKCTQAPCPNSVDCFVSRPTEKT) lie on the Extracellular side of the membrane. The chain crosses the membrane as a helical span at residues 210 to 230 (IFMLFMHSIAAISLLLNILEI). The Cytoplasmic portion of the chain corresponds to 231–505 (FHLGIRKIMR…IIHETYVYVY (275 aa)). Residues 371–383 (TMTASQHRPSSAL) are compositionally biased toward polar residues. Positions 371-491 (TMTASQHRPS…SKSSHVDSPP (121 aa)) are disordered. Over residues 437-446 (MSEKGQRHSD) the composition is skewed to basic and acidic residues. The segment covering 447 to 460 (SGSSRSLNSSCLDF) has biased composition (low complexity).

Belongs to the connexin family. Alpha-type (group II) subfamily. A connexon is composed of a hexamer of connexins. In terms of tissue distribution, low levels were detected in skin, heart, kidney, testis, ovary, intestine. Expression not detected in brain, sciatic nerve or liver. According to PubMed:15147297 expression is detected only in horizontal cells in the inner nuclear layer of the retina and not in other neurons of the central nervous system or tissues. Detected in the outer plexiform layer of the retina (at protein level).

The protein resides in the cell membrane. It is found in the cell junction. It localises to the gap junction. In terms of biological role, one gap junction consists of a cluster of closely packed pairs of transmembrane channels, the connexons, through which materials of low MW diffuse from one cell to a neighboring cell. Involved in tracer coupling between horizontal cells of the retina. May play a role in the regulation of horizontal cell patterning. The protein is Gap junction alpha-10 protein (Gja10) of Mus musculus (Mouse).